The chain runs to 418 residues: MFRRLLIATVVGILAAFAVAGFRHAMLLLEWLFLNNDSGSLVNAATNLSPWRRLLTPALGGLAAGLLLMGWQKFTQQRPHAPTDYMEALQTDGQFDYAASLVKSLASLLVVTSGSAIGREGAMILLAALAASCFAQRFTPRQEWKLWIACGAAAGMAAAYRAPLAGSLFIAEVLFGTMMLASLGPVIISAVVALLVSNLINHSDALLYSVQLSVTVQARDYALIISTGVLAGLCGPLLLTLMNACHRGFVSLKLAPPWQLALGGLIVGLLSLFTPAVWGNGYSTVQSFLTAPPLLMIIAGIFLCKLFAVLASSGSGAPGGVFTPTLFIGLAIGMLYGRSLGLWFPDGEEITLLLGLTGMATLLAATTHAPIMSTLMICEMTGEYQLLPGLLIACVIASVISRTLHRDSIYRQHTAKHS.

A run of 10 helical transmembrane segments spans residues 5–25, 54–74, 146–166, 168–188, 222–242, 258–278, 291–311, 316–336, 352–372, and 380–400; these read LLIATVVGILAAFAVAGFRHA, LLTPALGGLAAGLLLMGWQKF, LWIACGAAAGMAAAYRAPLAG, LFIAEVLFGTMMLASLGPVII, ALIISTGVLAGLCGPLLLTLM, WQLALGGLIVGLLSLFTPAVW, APPLLMIIAGIFLCKLFAVLA, GAPGGVFTPTLFIGLAIGMLY, LLLGLTGMATLLAATTHAPIM, and MTGEYQLLPGLLIACVIASVI.

Belongs to the chloride channel (TC 2.A.49) family. ClcB subfamily.

Its subcellular location is the cell inner membrane. Its function is as follows. Probably acts as an electrical shunt for an outwardly-directed proton pump that is linked to amino acid decarboxylation, as part of the extreme acid resistance (XAR) response. The chain is Voltage-gated ClC-type chloride channel ClcB from Escherichia coli (strain SMS-3-5 / SECEC).